Consider the following 334-residue polypeptide: Ferrochelatase (334 aa).

Fe cation-binding residues include His207 and Glu288.

Belongs to the ferrochelatase family.

It localises to the cytoplasm. The catalysed reaction is heme b + 2 H(+) = protoporphyrin IX + Fe(2+). The protein operates within porphyrin-containing compound metabolism; protoheme biosynthesis; protoheme from protoporphyrin-IX: step 1/1. Functionally, catalyzes the ferrous insertion into protoporphyrin IX. The polypeptide is Ferrochelatase (Helicobacter pylori (strain P12)).